A 291-amino-acid polypeptide reads, in one-letter code: Probable prolyl 4-hydroxylase 12 (291 aa).

The Cytoplasmic segment spans residues Met-1–Glu-156. Residues Asn-125 to Ala-239 form the Fe2OG dioxygenase domain. Fe cation-binding residues include Lys-142 and Asp-144. A helical; Signal-anchor for type II membrane protein membrane pass occupies residues Ser-157–Gly-173. The Lumenal portion of the chain corresponds to Glu-174–Cys-291. Asn-211 is a glycosylation site (N-linked (GlcNAc...) asparagine). His-220 serves as a coordination point for Fe cation. The region spanning Cys-251–Cys-291 is the ShKT domain. 3 disulfide bridges follow: Cys-251–Cys-291, Cys-258–Cys-284, and Cys-267–Cys-288.

This sequence belongs to the P4HA family. Fe(2+) is required as a cofactor. L-ascorbate serves as cofactor.

The protein resides in the endoplasmic reticulum membrane. It carries out the reaction L-prolyl-[collagen] + 2-oxoglutarate + O2 = trans-4-hydroxy-L-prolyl-[collagen] + succinate + CO2. Its function is as follows. Catalyzes the post-translational formation of 4-hydroxyproline in -Xaa-Pro-Gly- sequences in proline-rich peptide sequences of plant glycoproteins and other proteins. Hydroxyprolines are important constituent of many plant cell wall glycoproteins such as extensins, hydroxyproline-rich glycoproteins, lectins and arabinogalactan proteins. The protein is Probable prolyl 4-hydroxylase 12 of Arabidopsis thaliana (Mouse-ear cress).